A 429-amino-acid chain; its full sequence is Tryptophan synthase beta chain 2 (429 aa).

The interval 18–40 (NINPDLPSPLPEPKNPEGGKNIE) is disordered. K110 bears the N6-(pyridoxal phosphate)lysine mark.

Belongs to the TrpB family. As to quaternary structure, tetramer of two alpha and two beta chains. Requires pyridoxal 5'-phosphate as cofactor.

It catalyses the reaction (1S,2R)-1-C-(indol-3-yl)glycerol 3-phosphate + L-serine = D-glyceraldehyde 3-phosphate + L-tryptophan + H2O. Its pathway is amino-acid biosynthesis; L-tryptophan biosynthesis; L-tryptophan from chorismate: step 5/5. Functionally, the beta subunit is responsible for the synthesis of L-tryptophan from indole and L-serine. This Methanothermobacter thermautotrophicus (strain ATCC 29096 / DSM 1053 / JCM 10044 / NBRC 100330 / Delta H) (Methanobacterium thermoautotrophicum) protein is Tryptophan synthase beta chain 2 (trpB2).